A 252-amino-acid polypeptide reads, in one-letter code: Small ribosomal subunit protein uS3 (252 aa).

Residues 16–85 (IDEYLETKLE…NPQVEVKEVD (70 aa)) enclose the KH type-2 domain. The disordered stretch occupies residues 233 to 252 (EESEIEEITEEIEDVETLEE).

It belongs to the universal ribosomal protein uS3 family. As to quaternary structure, part of the 30S ribosomal subunit.

Binds the lower part of the 30S subunit head. In Methanosphaera stadtmanae (strain ATCC 43021 / DSM 3091 / JCM 11832 / MCB-3), this protein is Small ribosomal subunit protein uS3.